The primary structure comprises 66 residues: MAKGKDVRVTIILECTSCVRNDIKKEAAGISRYITQKNRHNTPSRLELRKFCPYCYKHTIHGEIKK.

It belongs to the bacterial ribosomal protein bL33 family.

The protein localises to the plastid. It localises to the chloroplast. The polypeptide is Large ribosomal subunit protein bL33c (rpl33) (Arabidopsis thaliana (Mouse-ear cress)).